The chain runs to 309 residues: Syndecan-1 (309 aa).

The first 22 residues, 1 to 22, serve as a signal peptide directing secretion; that stretch reads MRRAALWLWLCALALRLQPVLP. At 23–253 the chain is on the extracellular side; that stretch reads QIVTVNVPPE…GLLDRKEVLG (231 aa). 2 disordered regions span residues 28–57 and 145–185; these read NVPP…DITL and TTAQ…GGTS. Positions 32–42 are enriched in acidic residues; the sequence is EDQDGSGDDSD. O-linked (Xyl...) (chondroitin sulfate) serine glycosylation is present at S37. N43 is a glycosylation site (N-linked (GlcNAc...) asparagine). O-linked (Xyl...) (heparan sulfate) serine glycosylation is found at S45 and S47. Positions 173–183 are enriched in low complexity; that stretch reads GQPDQQPPSGG. O-linked (Xyl...) (chondroitin sulfate) serine glycans are attached at residues S205 and S215. A helical transmembrane segment spans residues 254–274; it reads GVIAGGLVGLIFAVCLVGFML. Topologically, residues 275–309 are cytoplasmic; sequence YRMKKKDEGSYSLEEPKQANGGAYQKPTKQEEFYA. The segment at 283 to 309 is disordered; the sequence is GSYSLEEPKQANGGAYQKPTKQEEFYA. S284 carries the phosphoserine modification.

Belongs to the syndecan proteoglycan family. As to quaternary structure, interacts with CDCP1. Interacts (via C-terminus) with TIAM1 (via PDZ domain). Interacts with MDK. In terms of processing, shedding is enhanced by a number of factors such as heparanase, thrombin or EGF. Also by stress and wound healing. PMA-mediated shedding is inhibited by TIMP3.

The protein localises to the membrane. It is found in the secreted. It localises to the extracellular exosome. In terms of biological role, cell surface proteoglycan that contains both heparan sulfate and chondroitin sulfate and that links the cytoskeleton to the interstitial matrix. Regulates exosome biogenesis in concert with SDCBP and PDCD6IP. Able to induce its own expression in dental mesenchymal cells and also in the neighboring dental epithelial cells via an MSX1-mediated pathway. This Mesocricetus auratus (Golden hamster) protein is Syndecan-1.